Reading from the N-terminus, the 290-residue chain is Tubulin polyglutamylase complex subunit 1 (290 aa).

A disordered region spans residues 1-30; the sequence is MAAVEKRRQAVPPPAGFTDSGRQSVSRAAG. 2 positions are modified to phosphoserine: Ser34 and Ser266.

As to quaternary structure, part of the neuronal tubulin polyglutamylase complex which contains TPGS1, TPGS2, TTLL1, LRRC49 and NICN1. Interacts with PCM1, CSTPP1 and LRRC49.

Its subcellular location is the cytoplasm. It is found in the cytoskeleton. The protein resides in the cilium axoneme. The protein localises to the flagellum axoneme. It localises to the cilium basal body. Its subcellular location is the flagellum basal body. It is found in the cell projection. The protein resides in the axon. The protein localises to the dendrite. It localises to the microtubule organizing center. Its subcellular location is the centrosome. It is found in the centriolar satellite. Subunit of the tubulin polyglutamylase complex (TPGC). The complex mediates cilia and flagella polyglutamylation which is essential for their biogenesis and motility. May act in the targeting of the tubulin polyglutamylase complex. Required for the development of the spermatid flagellum. This is Tubulin polyglutamylase complex subunit 1 from Homo sapiens (Human).